We begin with the raw amino-acid sequence, 477 residues long: UDP-N-acetylmuramate--L-alanine ligase (477 aa).

122–128 (GTHGKTT) contacts ATP.

Belongs to the MurCDEF family.

It localises to the cytoplasm. It carries out the reaction UDP-N-acetyl-alpha-D-muramate + L-alanine + ATP = UDP-N-acetyl-alpha-D-muramoyl-L-alanine + ADP + phosphate + H(+). It functions in the pathway cell wall biogenesis; peptidoglycan biosynthesis. In terms of biological role, cell wall formation. The polypeptide is UDP-N-acetylmuramate--L-alanine ligase (Xylella fastidiosa (strain 9a5c)).